The sequence spans 293 residues: NAD kinase (293 aa).

Catalysis depends on aspartate 74, which acts as the Proton acceptor. NAD(+) is bound by residues 74–75 (DG), arginine 79, 148–149 (NE), arginine 176, aspartate 178, 189–194 (TAYALS), and glutamine 248.

It belongs to the NAD kinase family. A divalent metal cation is required as a cofactor.

It localises to the cytoplasm. It carries out the reaction NAD(+) + ATP = ADP + NADP(+) + H(+). Functionally, involved in the regulation of the intracellular balance of NAD and NADP, and is a key enzyme in the biosynthesis of NADP. Catalyzes specifically the phosphorylation on 2'-hydroxyl of the adenosine moiety of NAD to yield NADP. This Blochmanniella floridana protein is NAD kinase.